The chain runs to 322 residues: Ribokinase (322 aa).

Residues 25-27 (MTD), 53-57 (GKGAN), and Glu154 each bind substrate. Residues Asn199, 235–240 (TLGAEG), and Thr256 contribute to the ATP site. Positions 263 and 265 each coordinate K(+). ATP-binding positions include 268–269 (GD) and Asn295. Residue Asp269 participates in substrate binding. Asp269 serves as the catalytic Proton acceptor. K(+) is bound by residues Ser301, Ala304, Gly306, and Ser310.

It belongs to the carbohydrate kinase PfkB family. Ribokinase subfamily. In terms of assembly, homodimer. Requires Mg(2+) as cofactor.

Its subcellular location is the cytoplasm. It localises to the nucleus. The catalysed reaction is D-ribose + ATP = D-ribose 5-phosphate + ADP + H(+). Its pathway is carbohydrate metabolism; D-ribose degradation; D-ribose 5-phosphate from beta-D-ribopyranose: step 2/2. Its activity is regulated as follows. Activated by a monovalent cation that binds near, but not in, the active site. The most likely occupant of the site in vivo is potassium. Ion binding induces a conformational change that may alter substrate affinity. Competitively inhibited by phosphonoacetic acid, etidronate, 2-carboxethylphosphonic acid, N-(phosphonomethyl)glycine, N-(phosphonomethyl)iminodiacetic acid and clodronate. Catalyzes the phosphorylation of ribose at O-5 in a reaction requiring ATP and magnesium. The resulting D-ribose-5-phosphate can then be used either for sythesis of nucleotides, histidine, and tryptophan, or as a component of the pentose phosphate pathway. This is Ribokinase from Homo sapiens (Human).